The primary structure comprises 623 residues: AFI1-like protein C776.06c (623 aa).

The uDENN domain occupies 5–204 (DYLLTAIFDP…IDNIPKPGSE (200 aa)). One can recognise a cDENN domain in the interval 248–386 (ISNLINTFID…SDATTTMDTK (139 aa)). In terms of domain architecture, dDENN spans 388 to 476 (LFNNTSPFTP…WSWDNDDEKV (89 aa)).

This sequence belongs to the AFI1/mesA family.

It is found in the cytoplasm. The protein resides in the cell cortex. The protein localises to the nucleus. In terms of biological role, involved in polarity establishment. The protein is AFI1-like protein C776.06c of Schizosaccharomyces pombe (strain 972 / ATCC 24843) (Fission yeast).